We begin with the raw amino-acid sequence, 280 residues long: Bifunctional protein FolD (280 aa).

Residues 161–163 (GRS), Ser-186, and Ile-227 contribute to the NADP(+) site.

This sequence belongs to the tetrahydrofolate dehydrogenase/cyclohydrolase family. Homodimer.

The catalysed reaction is (6R)-5,10-methylene-5,6,7,8-tetrahydrofolate + NADP(+) = (6R)-5,10-methenyltetrahydrofolate + NADPH. It carries out the reaction (6R)-5,10-methenyltetrahydrofolate + H2O = (6R)-10-formyltetrahydrofolate + H(+). It participates in one-carbon metabolism; tetrahydrofolate interconversion. Catalyzes the oxidation of 5,10-methylenetetrahydrofolate to 5,10-methenyltetrahydrofolate and then the hydrolysis of 5,10-methenyltetrahydrofolate to 10-formyltetrahydrofolate. This is Bifunctional protein FolD from Caldanaerobacter subterraneus subsp. tengcongensis (strain DSM 15242 / JCM 11007 / NBRC 100824 / MB4) (Thermoanaerobacter tengcongensis).